Reading from the N-terminus, the 299-residue chain is MTEHKSGFVSIIGRPNVGKSTFVNRVIGHKIAIMSDKAQTTRNKIQGVMTRDDAQIIFIDTPGIHKPKHKLGDYMMRVAKNTLSEIDAIMFMVNVNEDIGRGDEYIMEMLKNVKTPIFLVLNKIDLVHPDTLMPKIEQYQSYMDFTDIIPISALEGLNVDHFIDVLKSFLPEGPKYYPDNQISDHPEQFVVSEIIREKILHLTSEEIPHAIGVNVDRMIKEDEDRVRIETTIYVERDSQKGIVIGKGGKKLKEVGKRARRDIEMLLGSKVYLELWVKVQRDWRNKVNFIRQIGYVEDQD.

The Era-type G domain maps to Lys5 to Glu172. The G1 stretch occupies residues Gly13–Ser20. Gly13–Ser20 is a GTP binding site. The interval Gln39–Asn43 is G2. A G3 region spans residues Asp60–Gly63. Residues Asp60 to Ile64 and Asn122 to Asp125 contribute to the GTP site. Residues Asn122–Asp125 are G4. Residues Ile151 to Ala153 are G5. Residues Thr203–Arg280 enclose the KH type-2 domain.

It belongs to the TRAFAC class TrmE-Era-EngA-EngB-Septin-like GTPase superfamily. Era GTPase family. Monomer.

It is found in the cytoplasm. The protein resides in the cell membrane. An essential GTPase that binds both GDP and GTP, with rapid nucleotide exchange. Plays a role in 16S rRNA processing and 30S ribosomal subunit biogenesis and possibly also in cell cycle regulation and energy metabolism. This is GTPase Era from Staphylococcus epidermidis (strain ATCC 35984 / DSM 28319 / BCRC 17069 / CCUG 31568 / BM 3577 / RP62A).